Here is an 800-residue protein sequence, read N- to C-terminus: Putative antiporter subunit mnhA2 (800 aa).

Helical transmembrane passes span 3-23 (LVYL…TLFI), 29-49 (FAGY…LAQI), 78-98 (GLGL…FFYA), 109-129 (LPRF…IVVS), 133-153 (ILMY…ISYW), 167-187 (FIIT…LYII), 202-222 (SISE…GAFT), 249-269 (SATM…ILGL), 273-293 (YIYI…VTAL), 300-320 (GILA…VGLG), 337-357 (LILF…CALF), 387-407 (LVMT…GFLS), 428-448 (LTII…VYAV), 472-492 (PWLF…IFFI), 527-547 (GVNL…ILAL), 596-616 (IITV…VGLP), 627-647 (GPLE…LVFI), 651-671 (LTMV…FLLM), 676-696 (LALT…VSFS), 712-732 (TIKI…IFIA), and 768-788 (LDTM…YTLL).

It belongs to the CPA3 antiporters (TC 2.A.63) subunit A family. May form a heterooligomeric complex that consists of seven subunits: mnhA2, mnhB2, mnhC2, mnhD2, mnhE2, mnhF2 and mnhG2.

The protein resides in the cell membrane. The sequence is that of Putative antiporter subunit mnhA2 (mnhA2) from Staphylococcus haemolyticus (strain JCSC1435).